Here is a 476-residue protein sequence, read N- to C-terminus: Protein DETOXIFICATION 3 (476 aa).

A run of 12 helical transmembrane segments spans residues 35-55, 66-86, 117-137, 146-166, 185-205, 208-228, 260-280, 289-309, 331-351, 370-390, 402-422, and 433-453; these read AAPM…SVMV, GVAL…FGLA, IPIC…LISL, VAGS…FFIP, LTTL…FGLG, GAAM…SCYV, AAMV…SGLL, VLSI…GVAA, VLAG…LLFT, VANL…TAVL, IGAL…GVYL, and LWCG…FVTA.

It belongs to the multi antimicrobial extrusion (MATE) (TC 2.A.66.1) family.

It is found in the membrane. This chain is Protein DETOXIFICATION 3, found in Arabidopsis thaliana (Mouse-ear cress).